The sequence spans 189 residues: T cell receptor gamma constant 2 (189 aa).

The Ig-like domain occupies 10-104; the sequence is PKPTIFLPSI…NKNGIDQEII (95 aa). A disulfide bridge connects residues Cys32 and Cys88. Asn66, Asn120, Asn136, Asn142, and Asn151 each carry an N-linked (GlcNAc...) asparagine glycan. A helical membrane pass occupies residues 155 to 177; that stretch reads YYTYLLLLLKSVVYFAIITCCLL.

In terms of assembly, gamma-delta TR is a heterodimer composed of a gamma and delta chain; disulfide-linked. The gamma-delta TR is associated with the transmembrane signaling CD3 coreceptor proteins following the stoichiometry: a single gamma-delta TR heterodimer associates with one CD3D-CD3E heterodimer, one CD3G-CD3E heterodimer and one CD247 homodimer forming a stable octameric structure. Upon activation, gamma-delta TR complex associates with FCER1G to initiate intracellular signaling.

It is found in the cell membrane. Functionally, constant region of T cell receptor (TR) gamma chain that participates in the antigen recognition. Gamma-delta TRs recognize a variety of self and foreign non-peptide antigens frequently expressed at the epithelial boundaries between the host and external environment, including endogenous lipids presented by MH-like protein CD1D and phosphoantigens presented by butyrophilin-like molecule BTN3A1. Upon antigen recognition induces rapid, innate-like immune responses involved in pathogen clearance and tissue repair. Binding of gamma-delta TR complex to antigen triggers phosphorylation of immunoreceptor tyrosine-based activation motifs (ITAMs) in the CD3 chains by the LCK and FYN kinases, allowing the recruitment, phosphorylation, and activation of ZAP70 that facilitates phosphorylation of the scaffolding proteins LCP2 and LAT. This lead to the formation of a supramolecular signalosome that recruits the phospholipase PLCG1, resulting in calcium mobilization and ERK activation, ultimately leading to T cell expansion and differentiation into effector cells. Gamma-delta TRs are produced through somatic rearrangement of a limited repertoire of variable (V), diversity (D), and joining (J) genes. The potential diversity of gamma-delta TRs is conferred by the unique ability to rearrange (D) genes in tandem and to utilize all three reading frames. The combinatorial diversity is considerably increased by the sequence exonuclease trimming and random nucleotide (N) region additions which occur during the V-(D)-J rearrangements. The protein is T cell receptor gamma constant 2 of Homo sapiens (Human).